Here is an 895-residue protein sequence, read N- to C-terminus: Dystroglycan 1 (895 aa).

The signal sequence occupies residues 1 to 29; sequence MRMSVGSAVPLPLWGRTFLLLLSVAVTQS. The segment at 30-408 is required for laminin recognition; it reads HWPSEPSEAV…SQIRPTMTIP (379 aa). The segment at 49 to 71 is O-glycosylated at one site; the sequence is SMHSALSDLHETVPTVVGIPDGT. Asparagine 141 carries N-linked (GlcNAc...) asparagine glycosylation. Cysteine 182 and cysteine 264 are disulfide-bonded. Positions 316 to 485 are mucin-like domain; it reads ATPTPVTAIG…PATRMRTTTS (170 aa). Residues threonine 317, threonine 319, and threonine 379 are each glycosylated (O-linked (Man6P...) threonine). The interval 381–500 is disordered; the sequence is TLGPIQPTRV…GEPNQRPELK (120 aa). Residues 393-403 are compositionally biased toward polar residues; sequence AGTTVPSQIRP. A compositionally biased stretch (low complexity) spans 413 to 447; the sequence is PSTVTTPPTTTTKKPRVSTPRPATPSTDSSTTTTR. The tract at residues 463-485 is O-glycosylated at seven sites with GalNAc; the sequence is TTKAPITRLETASPATRMRTTTS. Residues 603 to 712 enclose the Peptidase S72 domain; sequence KAPARFKAKL…MSITVTGSGS (110 aa). Residues asparagine 641, asparagine 649, and asparagine 661 are each glycosylated (N-linked (GlcNAc...) asparagine). The Extracellular segment spans residues 654–749; the sequence is SIVVEWTNNT…DPEKSSEDDV (96 aa). A disulfide bond links cysteine 669 and cysteine 713. The segment at 724-747 is disordered; sequence PMRVPSEAPATEVPDRDPEKSSED. The segment covering 736–747 has biased composition (basic and acidic residues); that stretch reads VPDRDPEKSSED. Residues 750–775 traverse the membrane as a helical segment; it reads YLHTVIPAVVVAAILLIAGIIAMICY. Residues 776–782 carry the Nuclear localization signal motif; sequence RKKRKGK. The Cytoplasmic segment spans residues 776 to 895; it reads RKKRKGKLTL…YRSPPPYVPP (120 aa). Residue threonine 790 is modified to Phosphothreonine. Residues 819–895 form a required for interaction with CAV3 region; it reads LQEEKAPLPP…YRSPPPYVPP (77 aa). A disordered region spans residues 823 to 895; the sequence is KAPLPPPEYP…YRSPPPYVPP (73 aa). A compositionally biased stretch (polar residues) spans 832–846; the sequence is PNQSMPETTPLNQDT. The span at 859–870 shows a compositional bias: pro residues; it reads SAPPYQPPPPFT. A required for binding DMD and UTRN region spans residues 880-895; it reads PKNMTPYRSPPPYVPP. Residues 889–892 carry the PPXY motif motif; that stretch reads PPPY. Phosphotyrosine; by SRC is present on tyrosine 892.

In terms of assembly, monomer. Heterodimer of alpha- and beta-dystroglycan subunits which are the central components of the dystrophin-glycoprotein complex. This complex then can form a dystrophin-associated glycoprotein complex (DGC) which is composed of three subcomplexes: a cytoplasmic complex comprised of DMD (or UTRN), DTNA and a number of syntrophins, such as SNTB1, SNTB2, SNTG1 and SNTG2, the transmembrane dystroglycan complex, and the sarcoglycan-sarcospan complex. Interacts (via the N-terminal of alphaDAG1) with LARGE1; the interaction enhances laminin binding. Interacts with SGCD. Interacts with AGR2 and AGR3. Interacts (betaDAG1) with DMD; the interaction is inhibited by phosphorylation on the PPXY motif. Interacts (betaDAG1, via its PPXY motif) with UTRN (via its WWW and ZZ domains); the interaction is inhibited by phosphorylation on the PPXY motif. Interacts (betaDAG1, via its phosphorylated PPXY motif) with the SH2 domain-containing proteins, FYN, CSK, NCK and SHC. Interacts (betaDAG1) with CAV3 (via a central WW-like domain); the interaction disrupts the binding of DMD. BetaDAG1 directly interacts with ANK3, but not with ANK2; this interaction does not interfere with DMD-binding and is required for retention at costameres. Identified in a dystroglycan complex that contains at least PRX, DRP2, UTRN, DMD and DAG1. Interacts with POMGNT1. BetaDAG1 interacts with CD93. In terms of processing, O-glycosylated. POMGNT1 catalyzes the initial addition of N-acetylglucosamine, giving rise to the GlcNAc(beta1-2)Man(alpha1-)O-Ser/Thr moiety and thus providing the necessary basis for the addition of further carbohydrate moieties. Heavily O-glycosylated comprising of up to two thirds of its mass and the carbohydrate composition differs depending on tissue type. Mucin-type O-glycosylation is important for ligand binding activity. O-mannosylation is found in high abundance in both brain and muscle where the most abundant glycan is Sia-alpha-2-3-Gal-beta-1-4-Glc-NAc-beta-1-2-Man. In muscle, glycosylation on Thr-317, Thr-319 and Thr-379 by a phosphorylated O-mannosyl glycan with the structure 2-(N-acetylamido)-2-deoxygalactosyl-beta-1,3-2-(N-acetylamido)-2-deoxyglucosyl-beta-1,4-6-phosphomannose is mediated by like-acetylglucosaminyltransferase (LARGE1) protein amd is required for laminin binding. O-glycosylated in the N-terminal region with a core 1 or possibly core 8 glycan. The brain form displays a unique glycosylation pattern which is absent in other tissues; this form shows enhanced binding to laminin LAMA5 compared to the skeletal muscle form. N-glycosylated. Post-translationally, autolytic cleavage produces the alpha and beta subunits. In cutaneous cells, as well as in certain pathological conditions, shedding of beta-dystroglycan can occur releasing a peptide of about 30 kDa. In terms of processing, SRC-mediated phosphorylation of the PPXY motif of the beta subunit recruits SH2 domain-containing proteins, but inhibits binding to WWW domain-containing proteins, DMD and UTRN. This phosphorylation also inhibits nuclear entry. Expressed in brain (at protein level). Expressed in the myelin sheath of peripheral nerves.

The protein resides in the secreted. It localises to the extracellular space. It is found in the cell membrane. The protein localises to the cytoplasm. Its subcellular location is the cytoskeleton. The protein resides in the nucleus. It localises to the nucleoplasm. It is found in the sarcolemma. The protein localises to the postsynaptic cell membrane. In terms of biological role, the dystroglycan complex is involved in a number of processes including laminin and basement membrane assembly, sarcolemmal stability, cell survival, peripheral nerve myelination, nodal structure, cell migration, and epithelial polarization. Functionally, extracellular peripheral glycoprotein that acts as a receptor for extracellular matrix proteins containing laminin-G domains. Receptor for laminin-2 (LAMA2) and agrin in peripheral nerve Schwann cells. Also acts as a receptor for laminin LAMA5. Transmembrane protein that plays important roles in connecting the extracellular matrix to the cytoskeleton. Acts as a cell adhesion receptor in both muscle and non-muscle tissues. Receptor for both DMD and UTRN and, through these interactions, scaffolds axin to the cytoskeleton. Also functions in cell adhesion-mediated signaling and implicated in cell polarity. The chain is Dystroglycan 1 from Bos taurus (Bovine).